A 646-amino-acid polypeptide reads, in one-letter code: Translation initiation factor IF-2 (646 aa).

In terms of domain architecture, tr-type G spans 146–315 (PRPPVVTVMG…LLVAEMEELR (170 aa)). A G1 region spans residues 155–162 (GHVDHGKT). GTP is bound at residue 155-162 (GHVDHGKT). The interval 180–184 (GITQH) is G2. Residues 201–204 (DTPG) form a G3 region. GTP-binding positions include 201 to 205 (DTPGH) and 255 to 258 (NKID). The tract at residues 255–258 (NKID) is G4. Residues 291 to 293 (SAK) are G5.

It belongs to the TRAFAC class translation factor GTPase superfamily. Classic translation factor GTPase family. IF-2 subfamily.

It localises to the cytoplasm. In terms of biological role, one of the essential components for the initiation of protein synthesis. Protects formylmethionyl-tRNA from spontaneous hydrolysis and promotes its binding to the 30S ribosomal subunits. Also involved in the hydrolysis of GTP during the formation of the 70S ribosomal complex. The polypeptide is Translation initiation factor IF-2 (Clostridioides difficile (strain 630) (Peptoclostridium difficile)).